A 241-amino-acid polypeptide reads, in one-letter code: Terpene cyclase terB (241 aa).

A run of 5 helical transmembrane segments spans residues 19-39 (LADT…GAMI), 48-68 (YCMG…YTLV), 75-95 (VELA…FAAT), 114-134 (LIFL…AAEI), and 137-157 (ALAY…GGVC). An N-linked (GlcNAc...) asparagine glycan is attached at asparagine 163. A run of 2 helical transmembrane segments spans residues 169 to 189 (SVTL…FAFL) and 198 to 218 (FAWL…LADI).

The protein belongs to the paxB family.

The protein localises to the membrane. It functions in the pathway secondary metabolite biosynthesis. Its function is as follows. Terpene cyclase; part of the gene cluster that mediates the biosynthesis of terpendoles, indole-diterpene (IDT) mycotoxins including terpendole I, terpendole K, terpendole C, as well as the kinesin Eg5 inhibitor terpendole E. Terpendoles biosynthesis begins with the synthesis of geranylgeranyl diphosphate (GGPP) by a yet unidentified GGPP synthase. Condensation of indole-3-glycerol phosphate with GGPP by the prenyltransferase terC then forms 3-geranylgeranylindole (3-GGI), followed by epoxidation and cyclization of this intermediate (by the FAD-dependent monooxygeanse terM and the terpene cyclase terB) to form paspaline. The cytochrome monooxygenase terQ then hydroxylates paspalline at C-11 to yield terpendole E. The cytochrome monooxygenase terP converts terpendole E to 13-desoxyterpendole I, and terQ converts 13-desoxyterpendole I into terpendole I. TerF and terK are required for conversion of terpendole I to terpendole C which is further converted to terpendole K. This is Terpene cyclase terB from Tolypocladium album (Soil fungus).